Reading from the N-terminus, the 947-residue chain is Protocadherin alpha-4 (947 aa).

Positions 1-29 (MEFSWGSGQESQRLLLSFLLLAIWEAGNS) are cleaved as a signal peptide. Cadherin domains are found at residues 30-133 (QIHY…PPRF), 134-242 (PTTQ…APVF), 243-350 (DRSL…VPEL), 351-455 (EFKS…APVF), 456-565 (AQPE…APTL), and 573-681 (SGGI…APSR). Residues 30 to 697 (QIHYSIPEEA…HSEASLVDVN (668 aa)) lie on the Extracellular side of the membrane. Cys-96 and Cys-102 are joined by a disulfide. N-linked (GlcNAc...) asparagine glycosylation is found at Asn-257 and Asn-265. Thr-438 is a glycosylation site (O-linked (Man) threonine). O-linked (Man) serine glycans are attached at residues Ser-440 and Ser-442. Asn-548 carries N-linked (GlcNAc...) asparagine glycosylation. A helical transmembrane segment spans residues 698–718 (VYLIIAICAVSSLLVLTLLLY). The Cytoplasmic segment spans residues 719 to 947 (TALRCSTVPS…GNSTTDNSDQ (229 aa)). 6 PXXP repeats span residues 734-737 (PPKP), 774-777 (PSLS), 796-799 (PRQP), 829-832 (PGGP), 870-873 (PGNP), and 888-891 (PGSP). The interval 734–891 (PPKPVMVCSS…PDKFIIPGSP (158 aa)) is 6 X 4 AA repeats of P-X-X-P. A required for interaction with FYN region spans residues 738 to 947 (VMVCSSAVGS…GNSTTDNSDQ (210 aa)). 2 disordered regions span residues 761–805 (GEYP…DWRY) and 824–853 (ILRA…EVSP). Residues 891–947 (PAIISIRQEPANNQIDKSDFITFGKKEETKKKKKKKKGNKTQEKKEKGNSTTDNSDQ) form a disordered region. Over residues 906–920 (DKSDFITFGKKEETK) the composition is skewed to basic and acidic residues.

As to quaternary structure, forms homodimers in trans (molecules expressed by two different cells). Forms promiscuous heterodimers in cis (at the plasma membrane of the same cell) with other protocadherins. Interacts with FYN. In terms of tissue distribution, detected in brain throughout embryonic development. Detected in adult brain, in particular in cerebellum and forebrain.

The protein resides in the cell membrane. In terms of biological role, calcium-dependent cell-adhesion protein involved in cells self-recognition and non-self discrimination. Thereby, it is involved in the establishment and maintenance of specific neuronal connections in the brain. This is Protocadherin alpha-4 from Mus musculus (Mouse).